Consider the following 320-residue polypeptide: Heptaprenyl diphosphate synthase component 2 (320 aa).

Positions 45, 48, and 77 each coordinate isopentenyl diphosphate. The Mg(2+) site is built by D84 and D88. All-trans-hexaprenyl diphosphate is bound at residue R93. R94 is a binding site for isopentenyl diphosphate. Residues K170, T171, and Q208 each coordinate all-trans-hexaprenyl diphosphate.

This sequence belongs to the FPP/GGPP synthase family. In terms of assembly, heterodimer of component I and II. The cofactor is Mg(2+).

It catalyses the reaction 4 isopentenyl diphosphate + (2E,6E)-farnesyl diphosphate = all-trans-heptaprenyl diphosphate + 4 diphosphate. In terms of biological role, supplies heptaprenyl diphosphate, the precursor for the side chain of the isoprenoid quinone menaquinone-7 (MQ-7). This Geobacillus stearothermophilus (Bacillus stearothermophilus) protein is Heptaprenyl diphosphate synthase component 2 (hepT).